The sequence spans 101 residues: Small ribosomal subunit protein uS14 (101 aa).

A disordered region spans residues Met1 to Asp20. The span at Lys11 to Asp20 shows a compositional bias: basic and acidic residues.

Belongs to the universal ribosomal protein uS14 family. As to quaternary structure, part of the 30S ribosomal subunit. Contacts proteins S3 and S10.

Functionally, binds 16S rRNA, required for the assembly of 30S particles and may also be responsible for determining the conformation of the 16S rRNA at the A site. In Granulibacter bethesdensis (strain ATCC BAA-1260 / CGDNIH1), this protein is Small ribosomal subunit protein uS14.